Consider the following 76-residue polypeptide: Large ribosomal subunit protein uL30 (76 aa).

The protein belongs to the universal ribosomal protein uL30 family. Part of the 50S ribosomal subunit.

The protein is Large ribosomal subunit protein uL30 of Anaeromyxobacter dehalogenans (strain 2CP-1 / ATCC BAA-258).